A 2897-amino-acid chain; its full sequence is Chromodomain-helicase-DNA-binding protein 9 (2897 aa).

Residues 173–201 (QCTSLRSQQNRNNLNPGQNSLSQSKNFMN) show a composition bias toward polar residues. Disordered regions lie at residues 173–265 (QCTS…CSVS), 482–525 (QRQP…KQEK), and 537–671 (AKER…SAPL). K197 is covalently cross-linked (Glycyl lysine isopeptide (Lys-Gly) (interchain with G-Cter in SUMO2)). Residues 220-235 (SNSQQSISMQQFSQTS) show a composition bias toward low complexity. 2 stretches are compositionally biased toward polar residues: residues 247 to 260 (HQEG…PNMT) and 484 to 506 (QPPS…TQVR). At K499 the chain carries N6-acetyllysine. Over residues 508 to 525 (MSEKKQRKKVESESKQEK) the composition is skewed to basic and acidic residues. S550 is subject to Phosphoserine. Over residues 573 to 593 (KPKDKDSKKTKTCSKLKEKTK) the composition is skewed to basic and acidic residues. A Glycyl lysine isopeptide (Lys-Gly) (interchain with G-Cter in SUMO2) cross-link involves residue K596. S611 carries the post-translational modification Phosphoserine. Residues 634 to 644 (RRSNRQIKRKK) are compositionally biased toward basic residues. Over residues 645 to 660 (YAEDIEGKQSEEEVKG) the composition is skewed to basic and acidic residues. 2 Chromo domains span residues 690–761 (AIVD…HFFA) and 773–839 (VEVD…RLDR). The LXXLL motif 1 motif lies at 868–872 (LNWLL). Positions 872 to 1046 (LFNWYNRRNC…FSLLHFLEPL (175 aa)) constitute a Helicase ATP-binding domain. Position 885–892 (885–892 (DEMGLGKT)) interacts with ATP. The short motif at 997–1000 (DEAH) is the DEAH box element. An LXXLL motif 2 motif is present at residues 1036–1040 (LFSLL). The Helicase C-terminal domain occupies 1186–1337 (LIDKLLPKMK…KAVLQSMSGR (152 aa)). The disordered stretch occupies residues 1461 to 1484 (KDELAELSEAESEGDEKPKLRRPC). Residues 1465–1474 (AELSEAESEG) show a composition bias toward acidic residues. Phosphoserine occurs at positions 1468 and 1472. Positions 1475–1484 (DEKPKLRRPC) are enriched in basic and acidic residues. Glycyl lysine isopeptide (Lys-Gly) (interchain with G-Cter in SUMO2) cross-links involve residues K1588, K1738, and K1903. S2026 bears the Phosphoserine mark. Positions 2031 to 2035 (LPRLL) match the LXXLL motif 3 motif. A Glycyl lysine isopeptide (Lys-Gly) (interchain with G-Cter in SUMO2) cross-link involves residue K2038. Disordered regions lie at residues 2050-2238 (ENLK…QMNN) and 2305-2337 (GAAT…SKVK). Phosphoserine occurs at positions 2058 and 2059. K2074 participates in a covalent cross-link: Glycyl lysine isopeptide (Lys-Gly) (interchain with G-Cter in SUMO2). 2 positions are modified to phosphoserine: S2075 and S2079. Positions 2094–2104 (SGGKCETDRRM) are enriched in basic and acidic residues. Positions 2141–2193 (SSCSSRSSSSSSSSSCSHSRSGSSSSSSSSCSSASSSSSSSTSSSSSSSSSSS) are enriched in low complexity. The span at 2203-2216 (AQKRESTTHMKAYD) shows a compositional bias: basic and acidic residues. Polar residues predominate over residues 2221 to 2238 (ASLSTTQDETQDSFQMNN). Residues 2332 to 2481 (QMSKVKKHVR…LSYTQPQGIP (150 aa)) are binds A/T-rich DNA. Glycyl lysine isopeptide (Lys-Gly) (interchain with G-Cter in SUMO2) cross-links involve residues K2350, K2356, and K2361. Positions 2429–2436 (KKRRGRRK) are a.T hook-like. An LXXLL motif 4 motif is present at residues 2721–2725 (LPNLL). The segment at 2729-2777 (GLLTKPTESGTEDKKGSDSKESEGKTERTESQSSENGGENSVSSSPSTS) is disordered. Positions 2739-2758 (TEDKKGSDSKESEGKTERTE) are enriched in basic and acidic residues. Residues 2759-2777 (SQSSENGGENSVSSSPSTS) are compositionally biased toward low complexity. Residues 2793-2797 (LNPLL) carry the LXXLL motif 5 motif. Residues 2827 to 2897 (VQNKNSDLGS…SEDSDSSNED (71 aa)) form a disordered region. Residues 2840–2857 (VEVKEEDSRIKDQEDKGG) show a composition bias toward basic and acidic residues. Residue K2843 forms a Glycyl lysine isopeptide (Lys-Gly) (interchain with G-Cter in SUMO2) linkage. Residues 2877–2888 (ASSGSDSTSSSS) are compositionally biased toward low complexity.

This sequence belongs to the SNF2/RAD54 helicase family. As to quaternary structure, interacts with PPARA. Probably interacts with ESR1 and NR1I3. Phosphorylated on serine and tyrosine residues. In terms of tissue distribution, widely expressed at low levels. In bone marrow, expression is restricted to osteoprogenitor cells adjacent to mature osteoblasts.

Its subcellular location is the cytoplasm. It localises to the nucleus. It carries out the reaction ATP + H2O = ADP + phosphate + H(+). Functionally, probable ATP-dependent chromatin-remodeling factor. Acts as a transcriptional coactivator for PPARA and possibly other nuclear receptors. Has DNA-dependent ATPase activity and binds to A/T-rich DNA. Associates with A/T-rich regulatory regions in promoters of genes that participate in the differentiation of progenitors during osteogenesis. This is Chromodomain-helicase-DNA-binding protein 9 (CHD9) from Homo sapiens (Human).